The primary structure comprises 805 residues: Arginine/serine-rich protein PNISR (805 aa).

Residues 75-88 show a composition bias toward polar residues; sequence NNHGNFQGDSNFNR. 2 disordered regions span residues 75-331 and 382-805; these read NNHG…EEKE and LTGL…SRSR. Pro residues-rich tracts occupy residues 100–115 and 183–194; these read PPHP…PAPG and YWQPGPPGPPAP. A compositionally biased stretch (basic and acidic residues) spans 197 to 210; the sequence is NRRERPPSFRDRQR. Residues serine 204 and serine 211 each carry the phosphoserine modification. A Glycyl lysine isopeptide (Lys-Gly) (interchain with G-Cter in SUMO2) cross-link involves residue lysine 218. The stretch at 237–276 forms a coiled coil; the sequence is REGLEKMEREKQKKLEKERMEQQRSQLSKKEKKATEDAEG. Over residues 238–258 the composition is skewed to basic and acidic residues; the sequence is EGLEKMEREKQKKLEKERMEQ. Serine 290, serine 304, serine 313, and serine 321 each carry phosphoserine. The segment covering 290 to 299 has biased composition (acidic residues); sequence SDEEDEDAEN. The segment covering 384-393 has biased composition (gly residues); that stretch reads GLGGLGGYGS. Residues 421–463 show a composition bias toward basic and acidic residues; that stretch reads QKQEAFWRKEKEQQLLQDKQIEEEKQQTERVTKEMNEFIHREQ. Positions 427-461 form a coiled coil; that stretch reads WRKEKEQQLLQDKQIEEEKQQTERVTKEMNEFIHR. A phosphoserine mark is found at serine 465 and serine 467. Basic and acidic residues-rich tracts occupy residues 473–486 and 494–508; these read EADR…KRTP and EPKR…ERGS. Threonine 485 carries the post-translational modification Phosphothreonine. Lysine 496 is covalently cross-linked (Glycyl lysine isopeptide (Lys-Gly) (interchain with G-Cter in SUMO2)). Low complexity predominate over residues 509-550; that stretch reads RSGSSSSGSSSSGSRTSSSSSSVSSSSYSSSSGSSCTSSRSS. Basic residues-rich tracts occupy residues 551 to 560, 567 to 579, 587 to 598, and 607 to 639; these read SPKRRKRPSR, KARR…YSRR, TRGKLRDRRRSN, and RRNR…SRDR. A compositionally biased stretch (basic and acidic residues) spans 659 to 721; that stretch reads EAKEQDRKKE…KRKRESERTF (63 aa). Lysine 703 is covalently cross-linked (Glycyl lysine isopeptide (Lys-Gly) (interchain with G-Cter in SUMO2)). Phosphoserine is present on serine 726. Basic and acidic residues predominate over residues 732-753; that stretch reads IRHDSRQDSKKNATKDSKRHSG. Low complexity predominate over residues 754–767; the sequence is SDSSGRSSSESPGS. Basic residues-rich tracts occupy residues 771-781 and 789-805; these read KKAKKPKHSRS and RSGK…SRSR.

This sequence belongs to the splicing factor SR family. In terms of assembly, interacts with PNN.

Its subcellular location is the nucleus speckle. The polypeptide is Arginine/serine-rich protein PNISR (Pnisr) (Mus musculus (Mouse)).